We begin with the raw amino-acid sequence, 579 residues long: YTH domain-containing family protein 2 (579 aa).

The tract at residues 1–45 is disordered; it reads MSASSLLEQRPKGQGNKVQNGSVHQKDGLNDDDFEPYLSPQARPN. Residue Ser-2 is modified to N-acetylserine. Phosphoserine is present on residues Ser-2, Ser-4, Ser-5, Ser-22, Ser-39, and Ser-196. The segment at 2–384 is localization to mRNA processing bodies (P-bodies); the sequence is SASSLLEQRP…QAGSGSTPSE (383 aa). The interval 247–387 is disordered; that stretch reads AKQQPKLKTK…SGSTPSEPHP (141 aa). A compositionally biased stretch (polar residues) spans 291–316; the sequence is ALVQNIGQPTQGSPQHVGQQANNSPP. Residues 337 to 349 are compositionally biased toward low complexity; the sequence is AQLSVQQQAAQPT. Residue Ser-359 is modified to Phosphoserine. Gly residues predominate over residues 359–371; that stretch reads SGFGHNGVDGNGV. Over residues 372–383 the composition is skewed to polar residues; the sequence is GQSQAGSGSTPS. The segment at 385-579 is interaction with m6A-containing mRNAs; it reads PHPVLEKLRS…VKKERQGRGK (195 aa). A Phosphoserine modification is found at Ser-394. The 135-residue stretch at 410 to 544 folds into the YTH domain; it reads GRVFIIKSYS…EKAKQVLKII (135 aa). Residues 416 to 418, Asp-422, 432 to 433, Asn-462, Trp-486, and Trp-491 contribute to the RNA site; these read KSY and WC.

The protein belongs to the YTHDF family. YTHDF2 subfamily. Interacts with CNOT1; interaction is direct and promotes recruitment of the CCR4-NOT complex. Interacts with YTHDF3. Interacts with RIDA/HRSP12; interaction leads to recruitment of the ribonuclease P/MRP complex. Ubiquitinated by the SCF(SKP2) complex, leading to its degradation.

It is found in the cytoplasm. It localises to the cytosol. The protein localises to the P-body. The protein resides in the stress granule. Its subcellular location is the nucleus. Functionally, specifically recognizes and binds N6-methyladenosine (m6A)-containing RNAs, and regulates their stability. M6A is a modification present at internal sites of mRNAs and some non-coding RNAs and plays a role in mRNA stability and processing. Acts as a regulator of mRNA stability by promoting degradation of m6A-containing mRNAs via interaction with the CCR4-NOT and ribonuclease P/MRP complexes, depending on the context. The YTHDF paralogs (YTHDF1, YTHDF2 and YTHDF3) share m6A-containing mRNAs targets and act redundantly to mediate mRNA degradation and cellular differentiation. M6A-containing mRNAs containing a binding site for RIDA/HRSP12 (5'-GGUUC-3') are preferentially degraded by endoribonucleolytic cleavage: cooperative binding of RIDA/HRSP12 and YTHDF2 to transcripts leads to recruitment of the ribonuclease P/MRP complex. Other m6A-containing mRNAs undergo deadenylation via direct interaction between YTHDF2 and CNOT1, leading to recruitment of the CCR4-NOT and subsequent deadenylation of m6A-containing mRNAs. Required maternally to regulate oocyte maturation: probably acts by binding to m6A-containing mRNAs, thereby regulating maternal transcript dosage during oocyte maturation, which is essential for the competence of oocytes to sustain early zygotic development. Also required during spermatogenesis: regulates spermagonial adhesion by promoting degradation of m6A-containing transcripts coding for matrix metallopeptidases. Also involved in hematopoietic stem cells specification by binding to m6A-containing mRNAs, leading to promote their degradation. Also acts as a regulator of neural development by promoting m6A-dependent degradation of neural development-related mRNA targets. Inhibits neural specification of induced pluripotent stem cells by binding to methylated neural-specific mRNAs and promoting their degradation, thereby restraining neural differentiation. Regulates circadian regulation of hepatic lipid metabolism: acts by promoting m6A-dependent degradation of PPARA transcripts. Regulates the innate immune response to infection by inhibiting the type I interferon response: acts by binding to m6A-containing IFNB transcripts and promoting their degradation. May also act as a promoter of cap-independent mRNA translation following heat shock stress: upon stress, relocalizes to the nucleus and specifically binds mRNAs with some m6A methylation mark at their 5'-UTR, protecting demethylation of mRNAs by FTO, thereby promoting cap-independent mRNA translation. Regulates mitotic entry by promoting the phase-specific m6A-dependent degradation of WEE1 transcripts. Promotes formation of phase-separated membraneless compartments, such as P-bodies or stress granules, by undergoing liquid-liquid phase separation upon binding to mRNAs containing multiple m6A-modified residues: polymethylated mRNAs act as a multivalent scaffold for the binding of YTHDF proteins, juxtaposing their disordered regions and thereby leading to phase separation. The resulting mRNA-YTHDF complexes then partition into different endogenous phase-separated membraneless compartments, such as P-bodies, stress granules or neuronal RNA granules. May also recognize and bind RNAs modified by C5-methylcytosine (m5C) and act as a regulator of rRNA processing. The polypeptide is YTH domain-containing family protein 2 (Macaca fascicularis (Crab-eating macaque)).